The following is a 558-amino-acid chain: Formate--tetrahydrofolate ligase (558 aa).

Residue 67-74 (TPAGEGKT) participates in ATP binding.

Belongs to the formate--tetrahydrofolate ligase family.

It catalyses the reaction (6S)-5,6,7,8-tetrahydrofolate + formate + ATP = (6R)-10-formyltetrahydrofolate + ADP + phosphate. It functions in the pathway one-carbon metabolism; tetrahydrofolate interconversion. The sequence is that of Formate--tetrahydrofolate ligase from Ruegeria sp. (strain TM1040) (Silicibacter sp.).